The following is a 108-amino-acid chain: Peptidyl-prolyl cis-trans isomerase FKBP1A (108 aa).

Residues 20–108 (GQTCVVHYTG…VFDVELLKLE (89 aa)) form the PPIase FKBP-type domain. An N6-acetyllysine; alternate modification is found at Lys-53. At Lys-53 the chain carries N6-succinyllysine; alternate.

It belongs to the FKBP-type PPIase family. FKBP1 subfamily. Interacts with TGFBR1; prevents TGFBR1 phosphorylation by TGFBR2 and stabilizes it in the inactive conformation. Interacts with ACVR1B and SMAD7. Identified in a complex composed of RYR1, PDE4D, PKA, FKBP1A and protein phosphatase 1 (PP1). Interacts directly with RYR2 and RYR3. Interacts with GLMN; rapamycin and FK506 abolish the interaction with GLMN in a dose dependent manner. Interacts directly with RYR1.

The protein resides in the cytoplasm. Its subcellular location is the cytosol. It localises to the sarcoplasmic reticulum membrane. It catalyses the reaction [protein]-peptidylproline (omega=180) = [protein]-peptidylproline (omega=0). Inhibited by both FK506 and rapamycin. Functionally, keeps in an inactive conformation TGFBR1, the TGF-beta type I serine/threonine kinase receptor, preventing TGF-beta receptor activation in absence of ligand. Recruits SMAD7 to ACVR1B which prevents the association of SMAD2 and SMAD3 with the activin receptor complex, thereby blocking the activin signal. May modulate the RYR1 calcium channel activity. PPIases accelerate the folding of proteins. It catalyzes the cis-trans isomerization of proline imidic peptide bonds in oligopeptides. This is Peptidyl-prolyl cis-trans isomerase FKBP1A (FKBP1A) from Homo sapiens (Human).